The following is a 276-amino-acid chain: NAD kinase (276 aa).

Catalysis depends on Asp-61, which acts as the Proton acceptor. Residues 61-62 (DG), 134-135 (ND), Arg-145, Lys-162, Asp-164, Val-172, 175-180 (TAYSFS), and Gln-234 each bind NAD(+).

This sequence belongs to the NAD kinase family. It depends on a divalent metal cation as a cofactor.

It localises to the cytoplasm. The enzyme catalyses NAD(+) + ATP = ADP + NADP(+) + H(+). Functionally, involved in the regulation of the intracellular balance of NAD and NADP, and is a key enzyme in the biosynthesis of NADP. Catalyzes specifically the phosphorylation on 2'-hydroxyl of the adenosine moiety of NAD to yield NADP. This chain is NAD kinase, found in Clostridium perfringens (strain ATCC 13124 / DSM 756 / JCM 1290 / NCIMB 6125 / NCTC 8237 / Type A).